The chain runs to 194 residues: Ribonuclease HII (194 aa).

The region spanning 3-193 (ILTAGVDEAG…VRNLLAQQAL (191 aa)) is the RNase H type-2 domain. Residues aspartate 9, glutamate 10, and aspartate 101 each contribute to the a divalent metal cation site.

It belongs to the RNase HII family. Mn(2+) serves as cofactor. It depends on Mg(2+) as a cofactor.

It is found in the cytoplasm. The enzyme catalyses Endonucleolytic cleavage to 5'-phosphomonoester.. Its function is as follows. Endonuclease that specifically degrades the RNA of RNA-DNA hybrids. The sequence is that of Ribonuclease HII from Neisseria gonorrhoeae (strain ATCC 700825 / FA 1090).